The sequence spans 159 residues: uncharacterized protein (159 aa).

This is an uncharacterized protein from Schizosaccharomyces pombe (strain 972 / ATCC 24843) (Fission yeast).